Reading from the N-terminus, the 258-residue chain is Global transcriptional regulator CodY (258 aa).

The segment at 1–156 (MSSLLSKTRR…SATIVGMEML (156 aa)) is GAF domain. The segment at residues 204-223 (ASKIADKVGITRSVIVNALR) is a DNA-binding region (H-T-H motif).

Belongs to the CodY family.

It localises to the cytoplasm. Functionally, DNA-binding global transcriptional regulator which is involved in the adaptive response to starvation and acts by directly or indirectly controlling the expression of numerous genes in response to nutrient availability. During rapid exponential growth, CodY is highly active and represses genes whose products allow adaptation to nutrient depletion. The sequence is that of Global transcriptional regulator CodY from Clostridium botulinum (strain Alaska E43 / Type E3).